A 360-amino-acid chain; its full sequence is Alanine racemase (360 aa).

The active-site Proton acceptor; specific for D-alanine is lysine 34. N6-(pyridoxal phosphate)lysine is present on lysine 34. Arginine 129 contributes to the substrate binding site. The active-site Proton acceptor; specific for L-alanine is the tyrosine 254. A substrate-binding site is contributed by methionine 302.

The protein belongs to the alanine racemase family. The cofactor is pyridoxal 5'-phosphate.

It carries out the reaction L-alanine = D-alanine. Its pathway is amino-acid biosynthesis; D-alanine biosynthesis; D-alanine from L-alanine: step 1/1. Functionally, catalyzes the interconversion of L-alanine and D-alanine. May also act on other amino acids. This chain is Alanine racemase (alr), found in Pectobacterium carotovorum subsp. carotovorum (strain PC1).